The primary structure comprises 203 residues: Outer-membrane lipoprotein carrier protein (203 aa).

The signal sequence occupies residues 1–21 (MKKLAITCALLSGMVVSQVWA).

The protein belongs to the LolA family. Monomer.

It localises to the periplasm. In terms of biological role, participates in the translocation of lipoproteins from the inner membrane to the outer membrane. Only forms a complex with a lipoprotein if the residue after the N-terminal Cys is not an aspartate (The Asp acts as a targeting signal to indicate that the lipoprotein should stay in the inner membrane). The chain is Outer-membrane lipoprotein carrier protein from Klebsiella pneumoniae subsp. pneumoniae (strain ATCC 700721 / MGH 78578).